Consider the following 67-residue polypeptide: Large ribosomal subunit protein uL29 (67 aa).

It belongs to the universal ribosomal protein uL29 family.

In Clostridium acetobutylicum (strain ATCC 824 / DSM 792 / JCM 1419 / IAM 19013 / LMG 5710 / NBRC 13948 / NRRL B-527 / VKM B-1787 / 2291 / W), this protein is Large ribosomal subunit protein uL29.